The following is a 150-amino-acid chain: Large ribosomal subunit protein uL11 (150 aa).

The protein belongs to the universal ribosomal protein uL11 family. Part of the ribosomal stalk of the 50S ribosomal subunit. Interacts with L10 and the large rRNA to form the base of the stalk. L10 forms an elongated spine to which L12 dimers bind in a sequential fashion forming a multimeric L10(L12)X complex. One or more lysine residues are methylated.

In terms of biological role, forms part of the ribosomal stalk which helps the ribosome interact with GTP-bound translation factors. This Ureaplasma parvum serovar 3 (strain ATCC 27815 / 27 / NCTC 11736) protein is Large ribosomal subunit protein uL11.